We begin with the raw amino-acid sequence, 230 residues long: Fibrillarin-like rRNA/tRNA 2'-O-methyltransferase (230 aa).

Residues 87-88 (TT), 105-106 (EF), 130-131 (DA), and 150-153 (DVAQ) contribute to the S-adenosyl-L-methionine site.

It belongs to the methyltransferase superfamily. Fibrillarin family. Interacts with nop5. Component of box C/D small ribonucleoprotein (sRNP) particles that contain rpl7ae, FlpA and nop5, plus a guide RNA.

Functionally, involved in pre-rRNA and tRNA processing. Utilizes the methyl donor S-adenosyl-L-methionine to catalyze the site-specific 2'-hydroxyl methylation of ribose moieties in rRNA and tRNA. Site specificity is provided by a guide RNA that base pairs with the substrate. Methylation occurs at a characteristic distance from the sequence involved in base pairing with the guide RNA. The chain is Fibrillarin-like rRNA/tRNA 2'-O-methyltransferase from Methanococcus maripaludis (strain C6 / ATCC BAA-1332).